The primary structure comprises 473 residues: Iron transporter SMF3 (473 aa).

The next 2 helical transmembrane spans lie at 14-34 (FIGPGILVSVAYMDPGNYATS) and 44-64 (TLLFSIFISNIFAVLLQCLCV). Residue Asn-87 is glycosylated (N-linked (GlcNAc...) asparagine). Transmembrane regions (helical) follow at residues 97 to 117 (AIIATDLAEVVGTAIALQILF), 119 to 139 (IPLTWGVLLTVLDVLVILMFY), 152 to 172 (FEFGVGILVIGTCICFVLELF), 198 to 218 (ALYISLGILGATVMPHSLYLG), 257 to 277 (LIISLFLIATFVNSAILIVAG), 297 to 317 (LLVHYISPAAGLIFALAMLCS), 352 to 372 (LIAIVPCLFVTLTMGEKGISD), 373 to 393 (ILNFSQVVLSLILPIVSAPLI), and 448 to 468 (VFVWALIGSLNCYLVISYLLG).

Belongs to the NRAMP family.

The protein localises to the vacuole membrane. It localises to the endoplasmic reticulum membrane. Its function is as follows. Has a role in controlling the cellular iron ion levels. Mobilizes vacuolar stores of iron in conditions of low iron levels. This chain is Iron transporter SMF3 (SMF3), found in Saccharomyces cerevisiae (strain ATCC 204508 / S288c) (Baker's yeast).